We begin with the raw amino-acid sequence, 594 residues long: Cytoplasmic polyadenylation element-binding protein 1 (594 aa).

Residues 1–33 (MQHQVKACGDSKSTTRSLQGNRRSGAASLKKPS) are disordered. Residues 11–22 (SKSTTRSLQGNR) show a composition bias toward polar residues. RRM domains are found at residues 257-364 (RKVF…PWRL) and 381-452 (RTVF…HAET). The disordered stretch occupies residues 519–560 (TGDQTRILPRPPHHQSSHYSPRSHQMMNHDSMESSNQSRGNT). Positions 535–560 (SHYSPRSHQMMNHDSMESSNQSRGNT) are enriched in polar residues.

As to quaternary structure, interacts with fbf-1.

Functionally, cytoplasmic polyadenylation element binding protein that binds to and regulates the translation of specific mRNAs. Essential for progression through meiosis. Involved in spermatogenesis. The sequence is that of Cytoplasmic polyadenylation element-binding protein 1 (cpb-1) from Caenorhabditis remanei (Caenorhabditis vulgaris).